Reading from the N-terminus, the 307-residue chain is Homoserine O-acetyltransferase (307 aa).

The active-site Acyl-thioester intermediate is cysteine 142. Residues lysine 163 and serine 192 each coordinate substrate. Residue histidine 235 is the Proton acceptor of the active site. The active site involves glutamate 237. Arginine 249 lines the substrate pocket.

The protein belongs to the MetA family.

It is found in the cytoplasm. The enzyme catalyses L-homoserine + acetyl-CoA = O-acetyl-L-homoserine + CoA. It participates in amino-acid biosynthesis; L-methionine biosynthesis via de novo pathway; O-acetyl-L-homoserine from L-homoserine: step 1/1. Its function is as follows. Transfers an acetyl group from acetyl-CoA to L-homoserine, forming acetyl-L-homoserine. The sequence is that of Homoserine O-acetyltransferase from Desulfitobacterium hafniense (strain Y51).